Consider the following 186-residue polypeptide: MDKVTLKKNLQEKMDKALKVLDHELKGLRTGRASVNLLDSVTVEAYGDRMPLSQVASLTTPDARTINVQVWDKSMVSSVEKAITVANLGLTPSSDGQLIRLPIPALTEERRKELAKLAHKYGEDTKISLRNIRRDGNEELKKMEKDNIIAKDEHHSLAEQVQKLTDEYSSKVDSAIKQKEQEIMTV.

The protein belongs to the RRF family.

The protein localises to the cytoplasm. Its function is as follows. Responsible for the release of ribosomes from messenger RNA at the termination of protein biosynthesis. May increase the efficiency of translation by recycling ribosomes from one round of translation to another. The chain is Ribosome-recycling factor from Rickettsia bellii (strain OSU 85-389).